We begin with the raw amino-acid sequence, 585 residues long: Glutamine--tRNA ligase (585 aa).

The 'HIGH' region motif lies at 51–61; that stretch reads PEPNGYLHIGH. ATP is bound by residues 52–54 and 58–64; these read EPN and HIGHAKS. Positions 84 and 238 each coordinate L-glutamine. Residues threonine 257 and 292–293 each bind ATP; that span reads RL. The 'KMSKS' region motif lies at 299 to 303; it reads ITSKR.

It belongs to the class-I aminoacyl-tRNA synthetase family. In terms of assembly, monomer.

It localises to the cytoplasm. It carries out the reaction tRNA(Gln) + L-glutamine + ATP = L-glutaminyl-tRNA(Gln) + AMP + diphosphate. In Cupriavidus necator (strain ATCC 17699 / DSM 428 / KCTC 22496 / NCIMB 10442 / H16 / Stanier 337) (Ralstonia eutropha), this protein is Glutamine--tRNA ligase.